Reading from the N-terminus, the 157-residue chain is MAPKTEPGRRVVADNRSARFHYAIEDTFEAGIALTGTEVKSLRGGKATIGESYAGPSGNDLMLFNAYIPEYLEANRFNHDTKRPRRLLLHRRQINKLIGATQRQGYTVIPLKIYFNDKGRAKVELGLGKGKQLHDKRESVKQRDWQRDKARLMRDKG.

Residues 131–157 are disordered; it reads KQLHDKRESVKQRDWQRDKARLMRDKG. The span at 132 to 157 shows a compositional bias: basic and acidic residues; the sequence is QLHDKRESVKQRDWQRDKARLMRDKG.

The protein belongs to the SmpB family.

Its subcellular location is the cytoplasm. In terms of biological role, required for rescue of stalled ribosomes mediated by trans-translation. Binds to transfer-messenger RNA (tmRNA), required for stable association of tmRNA with ribosomes. tmRNA and SmpB together mimic tRNA shape, replacing the anticodon stem-loop with SmpB. tmRNA is encoded by the ssrA gene; the 2 termini fold to resemble tRNA(Ala) and it encodes a 'tag peptide', a short internal open reading frame. During trans-translation Ala-aminoacylated tmRNA acts like a tRNA, entering the A-site of stalled ribosomes, displacing the stalled mRNA. The ribosome then switches to translate the ORF on the tmRNA; the nascent peptide is terminated with the 'tag peptide' encoded by the tmRNA and targeted for degradation. The ribosome is freed to recommence translation, which seems to be the essential function of trans-translation. This chain is SsrA-binding protein, found in Methylorubrum populi (strain ATCC BAA-705 / NCIMB 13946 / BJ001) (Methylobacterium populi).